The sequence spans 93 residues: UPF0298 protein lwe2074 (93 aa).

Belongs to the UPF0298 family.

It localises to the cytoplasm. This Listeria welshimeri serovar 6b (strain ATCC 35897 / DSM 20650 / CCUG 15529 / CIP 8149 / NCTC 11857 / SLCC 5334 / V8) protein is UPF0298 protein lwe2074.